Reading from the N-terminus, the 403-residue chain is Propionate kinase (403 aa).

This sequence belongs to the acetokinase family. PduW subfamily.

Its subcellular location is the cytoplasm. The catalysed reaction is propanoate + ATP = propanoyl phosphate + ADP. It functions in the pathway polyol metabolism; 1,2-propanediol degradation. Functionally, works with phosphate acetyltransferase (pta) to capture exogenous propionate and regenerate propionyl-CoA during degradation of 1,2-propanediol (1,2-PD). This is Propionate kinase from Citrobacter rodentium (strain ICC168) (Citrobacter freundii biotype 4280).